A 356-amino-acid polypeptide reads, in one-letter code: Histidinol-phosphate aminotransferase (356 aa).

The residue at position 214 (Lys214) is an N6-(pyridoxal phosphate)lysine.

Belongs to the class-II pyridoxal-phosphate-dependent aminotransferase family. Histidinol-phosphate aminotransferase subfamily. As to quaternary structure, homodimer. It depends on pyridoxal 5'-phosphate as a cofactor.

It catalyses the reaction L-histidinol phosphate + 2-oxoglutarate = 3-(imidazol-4-yl)-2-oxopropyl phosphate + L-glutamate. It functions in the pathway amino-acid biosynthesis; L-histidine biosynthesis; L-histidine from 5-phospho-alpha-D-ribose 1-diphosphate: step 7/9. The sequence is that of Histidinol-phosphate aminotransferase from Escherichia coli O9:H4 (strain HS).